The chain runs to 257 residues: Imidazole glycerol phosphate synthase subunit HisF (257 aa).

Residues Asp-11 and Asp-130 contribute to the active site.

The protein belongs to the HisA/HisF family. As to quaternary structure, heterodimer of HisH and HisF.

The protein resides in the cytoplasm. The enzyme catalyses 5-[(5-phospho-1-deoxy-D-ribulos-1-ylimino)methylamino]-1-(5-phospho-beta-D-ribosyl)imidazole-4-carboxamide + L-glutamine = D-erythro-1-(imidazol-4-yl)glycerol 3-phosphate + 5-amino-1-(5-phospho-beta-D-ribosyl)imidazole-4-carboxamide + L-glutamate + H(+). It functions in the pathway amino-acid biosynthesis; L-histidine biosynthesis; L-histidine from 5-phospho-alpha-D-ribose 1-diphosphate: step 5/9. Its function is as follows. IGPS catalyzes the conversion of PRFAR and glutamine to IGP, AICAR and glutamate. The HisF subunit catalyzes the cyclization activity that produces IGP and AICAR from PRFAR using the ammonia provided by the HisH subunit. The chain is Imidazole glycerol phosphate synthase subunit HisF from Shewanella loihica (strain ATCC BAA-1088 / PV-4).